A 907-amino-acid chain; its full sequence is Protein MEI2-like 4 (907 aa).

The tract at residues 28-58 is disordered; that stretch reads QFGFMKNNPMPEGGVDRSSNLPTSSWTSDSY. The span at 44 to 54 shows a compositional bias: polar residues; the sequence is RSSNLPTSSWT. RRM domains follow at residues 211 to 284 and 295 to 368; these read RILF…YSIP and GALW…PTCP. The segment at 856–907 is disordered; that stretch reads AGPNAGDQEPFPMGSNIRSRPGKHRTNSIENYTNFSSSSDNRDEPANGNDSM. Residues 883–894 are compositionally biased toward polar residues; it reads SIENYTNFSSSS.

Functionally, probable RNA-binding protein that plays a role in meiosis and vegetative growth. The chain is Protein MEI2-like 4 (ML4) from Arabidopsis thaliana (Mouse-ear cress).